A 513-amino-acid polypeptide reads, in one-letter code: Interferon-induced, double-stranded RNA-activated protein kinase (513 aa).

Ala2 is modified (N-acetylalanine). One can recognise a DRBM 1 domain in the interval 8-76; that stretch reads FYVDKLNKYS…AKLAVEILDN (69 aa). Residue Lys68 forms a Glycyl lysine isopeptide (Lys-Gly) (interchain with G-Cter in ISG15) linkage. Residue Ser82 is modified to Phosphoserine. Thr84 is subject to Phosphothreonine. Positions 95–162 constitute a DRBM 2 domain; it reads NYIGLVNSFA…AKNAYQKLSE (68 aa). Phosphotyrosine; by autocatalysis is present on Tyr96. Lys154 participates in a covalent cross-link: Glycyl lysine isopeptide (Lys-Gly) (interchain with G-Cter in ISG15). Tyr157 carries the post-translational modification Phosphotyrosine; by autocatalysis. Phosphothreonine is present on Thr227. Residues 235–513 form an interaction with TRAF5 region; sequence DFEDIEEIGS…ISEKKKRNTC (279 aa). The 267-residue stretch at 236-502 folds into the Protein kinase domain; sequence FEDIEEIGSG…EILKTLAEWK (267 aa). Position 242–250 (242–250) interacts with ATP; sequence IGSGGFGQV. The residue at position 262 (Tyr262) is a Phosphotyrosine; by autocatalysis. Lys265 contacts ATP. Residue Asp373 is the Proton acceptor of the active site. Residues Thr406 and Thr411 each carry the phosphothreonine; by autocatalysis modification. Ser416 is subject to Phosphoserine.

Belongs to the protein kinase superfamily. Ser/Thr protein kinase family. GCN2 subfamily. In terms of assembly, homodimer. Interacts with DNAJC3. Interacts with STRBP. Forms a complex with FANCA, FANCC, FANCG and HSP70. Interacts with ADAR/ADAR1. The inactive form interacts with NCK1 and GSN. Interacts (via the kinase catalytic domain) with STAT3 (via SH2 domain), TRAF2 (C-terminus), TRAF5 (C-terminus) and TRAF6 (C-terminus). Interacts with MAP2K6, IKBKB/IKKB, IRS1, NPM1, TARBP2, NLRP1, NLRP3, NLRC4 and AIM2. Interacts (via DRBM 1 domain) with DUS2L (via DRBM domain). Interacts with DHX9 (via N-terminus) and this interaction is dependent upon activation of the kinase. Autophosphorylated on several Ser, Thr and Tyr residues. Autophosphorylation of Thr-411 is dependent on Thr-406 and is stimulated by dsRNA binding and dimerization. Autophosphorylation apparently leads to the activation of the kinase. Tyrosine autophosphorylation is essential for efficient dsRNA-binding, dimerization, and kinase activation.

It localises to the cytoplasm. It is found in the nucleus. The protein localises to the perinuclear region. The catalysed reaction is L-seryl-[protein] + ATP = O-phospho-L-seryl-[protein] + ADP + H(+). It catalyses the reaction L-threonyl-[protein] + ATP = O-phospho-L-threonyl-[protein] + ADP + H(+). The enzyme catalyses L-tyrosyl-[protein] + ATP = O-phospho-L-tyrosyl-[protein] + ADP + H(+). Initially produced in an inactive form and is activated by binding to viral dsRNA, which causes dimerization and autophosphorylation in the activation loop and stimulation of function. ISGylation can activate it in the absence of viral infection. Can also be activated by heparin, pro-inflammatory stimuli, growth factors, cytokines, oxidative stress and the cellular protein PRKRA. Activity is markedly stimulated by manganese ions. Activation is blocked by the cellular proteins TARBP2, DUS2L, NPM1, NCK1 and ADAR. Functionally, IFN-induced dsRNA-dependent serine/threonine-protein kinase that phosphorylates the alpha subunit of eukaryotic translation initiation factor 2 (EIF2S1/eIF-2-alpha) and plays a key role in the innate immune response to viral infection. Inhibits viral replication via the integrated stress response (ISR): EIF2S1/eIF-2-alpha phosphorylation in response to viral infection converts EIF2S1/eIF-2-alpha in a global protein synthesis inhibitor, resulting to a shutdown of cellular and viral protein synthesis, while concomitantly initiating the preferential translation of ISR-specific mRNAs, such as the transcriptional activator ATF4. Exerts its antiviral activity on a wide range of DNA and RNA viruses. Also involved in the regulation of signal transduction, apoptosis, cell proliferation and differentiation: phosphorylates other substrates including p53/TP53, PPP2R5A, DHX9, ILF3 and IRS1. In addition to serine/threonine-protein kinase activity, also has tyrosine-protein kinase activity and phosphorylates CDK1 at 'Tyr-4' upon DNA damage, facilitating its ubiquitination and proteasomal degradation. Either as an adapter protein and/or via its kinase activity, can regulate various signaling pathways (p38 MAP kinase, NF-kappa-B and insulin signaling pathways) and transcription factors (JUN, STAT1, STAT3, IRF1, ATF3) involved in the expression of genes encoding pro-inflammatory cytokines and IFNs. Activates the NF-kappa-B pathway via interaction with IKBKB and TRAF family of proteins and activates the p38 MAP kinase pathway via interaction with MAP2K6. Can act as both a positive and negative regulator of the insulin signaling pathway (ISP). Negatively regulates ISP by inducing the inhibitory phosphorylation of insulin receptor substrate 1 (IRS1) at 'Ser-312' and positively regulates ISP via phosphorylation of PPP2R5A which activates FOXO1, which in turn up-regulates the expression of insulin receptor substrate 2 (IRS2). Can regulate NLRP3 inflammasome assembly and the activation of NLRP3, NLRP1, AIM2 and NLRC4 inflammasomes. Plays a role in the regulation of the cytoskeleton by binding to gelsolin (GSN), sequestering the protein in an inactive conformation away from actin. This Rattus norvegicus (Rat) protein is Interferon-induced, double-stranded RNA-activated protein kinase (Eif2ak2).